The following is a 106-amino-acid chain: uncharacterized protein (106 aa).

2 consecutive transmembrane segments (helical) span residues 10–30 and 65–85; these read VYIQ…VAFV and LDFA…LLAY.

It localises to the membrane. This is an uncharacterized protein from Saccharomyces cerevisiae (strain ATCC 204508 / S288c) (Baker's yeast).